The primary structure comprises 901 residues: HTH-type transcriptional regulator MalT (901 aa).

39 to 46 contacts ATP; the sequence is SPAGYGKT. Residues 829 to 894 enclose the HTH luxR-type domain; sequence ELIRTSPLTQ…AAVQHAQKLL (66 aa). Residues 853–872 constitute a DNA-binding region (H-T-H motif); it reads NEQIAGELEVAATTIKTHIR.

The protein belongs to the MalT family. As to quaternary structure, monomer in solution. Oligomerizes to an active state in the presence of the positive effectors ATP and maltotriose.

Its activity is regulated as follows. Activated by ATP and maltotriose, which are both required for DNA binding. In terms of biological role, positively regulates the transcription of the maltose regulon whose gene products are responsible for uptake and catabolism of malto-oligosaccharides. Specifically binds to the promoter region of its target genes, recognizing a short DNA motif called the MalT box. This chain is HTH-type transcriptional regulator MalT, found in Escherichia coli O6:K15:H31 (strain 536 / UPEC).